The sequence spans 362 residues: Myricetin 3'-O-methyltransferase 4 (362 aa).

S-adenosyl-L-methionine is bound at residue aspartate 229. Catalysis depends on histidine 267, which acts as the Proton acceptor.

It belongs to the class I-like SAM-binding methyltransferase superfamily. Cation-independent O-methyltransferase family. As to quaternary structure, homodimer. In terms of tissue distribution, mainly expressed in stem and petiole trichomes.

The catalysed reaction is myricetin + S-adenosyl-L-methionine = laricitrin + S-adenosyl-L-homocysteine + H(+). The protein operates within flavonoid metabolism. Its function is as follows. Flavonoid 3'-O-methyltransferase involved in the biosynthesis of polymethoxylated flavonoids natural products such as myricetin derivatives, aroma compounds possessing antioxidant properties and exhibiting pharmacological activities such as anti-carcinogen, anti-viral, anti-thrombotic, anti-diabetic, anti-atherosclerotic, and anti-inflammatory effects. Catalyzes S-adenosylmethionine-dependent regioselective 3'-O-methylation of flavonoids; active on various hydroxylated flavonoid substrates, including myricetin, thus producing 3'-methyl myricetin (laricitrin). The protein is Myricetin 3'-O-methyltransferase 4 of Solanum lycopersicum (Tomato).